The chain runs to 118 residues: Ribonuclease P protein component (118 aa).

It belongs to the RnpA family. In terms of assembly, consists of a catalytic RNA component (M1 or rnpB) and a protein subunit.

It catalyses the reaction Endonucleolytic cleavage of RNA, removing 5'-extranucleotides from tRNA precursor.. In terms of biological role, RNaseP catalyzes the removal of the 5'-leader sequence from pre-tRNA to produce the mature 5'-terminus. It can also cleave other RNA substrates such as 4.5S RNA. The protein component plays an auxiliary but essential role in vivo by binding to the 5'-leader sequence and broadening the substrate specificity of the ribozyme. The chain is Ribonuclease P protein component from Rickettsia peacockii (strain Rustic).